The sequence spans 353 residues: MAREMRLGGKERMKTGVVKIGLVAALGVVGLISAGGVYAGQPRVISTIQTGATWEPLGREEPLTVPEVHFRVKHSPFKSELVRYGQFQFNDAAWSLQGSYSCASCHYERGQTTGLIWDLGDEGWGSWKNTKYIRGGRYLPPFRHEGFTGHPDEIVGATSSLDRVCGRDPGFVFRSENFSPMRLEALICYIRALEFTGSPFRNADGSLTEAQKRGQKIFEDPKVGCLECHPGDPMDPRALFSDAQTHDVGTGRVGVNGFRSTPGKVFNISALEAGEDPYGVESNTPIIGLDLVKEFDTPTLRDIYASGTYFHDGGARTLMDTINNTVNDKDMHGRTSHLKQQELQDLVEYLKAL.

Positions 1–39 (MAREMRLGGKERMKTGVVKIGLVAALGVVGLISAGGVYA) are cleaved as a signal peptide. Cys-102, Cys-105, and His-106 together coordinate heme c. 8 residues coordinate Ca(2+): Asp-118, Leu-119, Glu-122, Gly-123, Ser-126, Asn-129, Leu-139, and Pro-141. Cys-165, Cys-225, Cys-228, and His-229 together coordinate heme c. The Cytochrome c domain maps to 209–353 (EAQKRGQKIF…QDLVEYLKAL (145 aa)). Positions 296, 306, 307, and 308 each coordinate Ca(2+). His-332 serves as a coordination point for heme c.

Part of the hydrazine synthase complex that forms an elongated dimer of heterotrimers composed of one alpha, one beta and one gamma subunit. The cofactor is heme c.

The protein resides in the anammoxosome. It catalyses the reaction hydrazine + 3 Fe(III)-[cytochrome c] + H2O = nitric oxide + 3 Fe(II)-[cytochrome c] + NH4(+) + 2 H(+). It functions in the pathway nitrogen metabolism. In terms of biological role, component of the hydrazine synthase complex that catalyzes the condensation of nitric oxide (NO) with ammonium to form hydrazine. The gamma subunit catalyzes the first half-reaction, i.e. the three-electron reduction of nitric oxide to hydroxylamine; it may obtain electrons from the triheme cytochrome c kuste2854. Is involved in anaerobic ammonium oxidation (anammox), a biological process in which nitrite is used as the electron acceptor in the conversion of ammonium to dinitrogen gas (N2) and water; this bacterial process has a major role in the Earth's nitrogen cycle and has been estimated to synthesize up to 50% of the dinitrogen gas emitted into our atmosphere from the oceans. The sequence is that of Hydrazine synthase subunit gamma from Kuenenia stuttgartiensis.